We begin with the raw amino-acid sequence, 503 residues long: Protein phosphatase eya-1 (503 aa).

The active-site Nucleophile is aspartate 237. The Mg(2+) site is built by aspartate 237 and aspartate 239. The active-site Proton donor is the aspartate 239.

Belongs to the HAD-like hydrolase superfamily. EYA family. Interacts (via C-terminus) with ceh-34 (via N-terminus). Requires Mg(2+) as cofactor. As to expression, expressed in body wall muscles. Expressed in BAG sensory neurons and in other head neurons.

It is found in the nucleus. It catalyses the reaction O-phospho-L-tyrosyl-[protein] + H2O = L-tyrosyl-[protein] + phosphate. Functionally, tyrosine protein phosphatase. Acts probably as a transcription regulator in the embryonic and postembryonic development of several tissues including pharynx, vulva and gonads. Required for the development of anterior tissues during late embryogenesis. Together with ceh-34, required to specify the coelomocyte fate in embryonic and postembryonic precursors. In the anterior part of the embryo, prevents apoptosis in cells that are not fated to die. Together with ceh-34 activates proapoptotic factor egl-1 expression to promote motor neuron M4 sister cell apoptosis. Also promotes apoptosis of I1 pharyngeal neuron sister cell. Plays a role in locomotion and fertility. May play a role in resistance to heat and oxidative stresses. May cooperate with the transcription factors vab-3 and ceh-32 to repress transcription factor ets-5 expression in non BAG neuronal cells. The sequence is that of Protein phosphatase eya-1 from Caenorhabditis elegans.